Reading from the N-terminus, the 641-residue chain is Macrolide export ATP-binding/permease protein MacB (641 aa).

The 235-residue stretch at 2 to 236 folds into the ABC transporter domain; sequence IFLKNICKNI…LILKTMPKEK (235 aa). ATP is bound at residue 34–41; the sequence is GQSGSGKT. The next 4 membrane-spanning stretches (helical) occupy residues 265–285, 519–539, 571–591, and 604–624; these read ILTMLGIIIGIASVVCVVALG, ACVAVIALIVGGIGVMNIMLV, MICTIGAILGVILSIFVIFAF, and AYSVLLGLLSSMFIGVVFGFF.

The protein belongs to the ABC transporter superfamily. Macrolide exporter (TC 3.A.1.122) family. Homodimer.

It is found in the cell inner membrane. Functionally, non-canonical ABC transporter that contains transmembrane domains (TMD), which form a pore in the inner membrane, and an ATP-binding domain (NBD), which is responsible for energy generation. Confers resistance against macrolides. This is Macrolide export ATP-binding/permease protein MacB from Campylobacter jejuni subsp. jejuni serotype O:2 (strain ATCC 700819 / NCTC 11168).